Reading from the N-terminus, the 318-residue chain is L-carnitine dehydrogenase (318 aa).

14-19 serves as a coordination point for NAD(+); that stretch reads GSGVIG.

Belongs to the 3-hydroxyacyl-CoA dehydrogenase family. L-carnitine dehydrogenase subfamily. As to quaternary structure, homodimer.

It is found in the cytoplasm. It carries out the reaction carnitine + NAD(+) = 3-dehydrocarnitine + NADH + H(+). It functions in the pathway amine and polyamine metabolism; carnitine metabolism. In terms of biological role, catalyzes the NAD(+)-dependent oxidation of L-carnitine to 3-dehydrocarnitine. The protein is L-carnitine dehydrogenase of Pseudomonas syringae pv. syringae (strain B728a).